Reading from the N-terminus, the 987-residue chain is Mitotic checkpoint serine/threonine-protein kinase bub-1 (987 aa).

Disordered regions lie at residues 278–385 and 574–599; these read RRRH…TSKS and LAANQAVQPSVTESSKPERSDPKDSS. Positions 350 to 364 are enriched in basic and acidic residues; the sequence is ERLKIMTAGRKDGNP. The segment covering 368–380 has biased composition (low complexity); sequence STSISSNYSTASA. Over residues 575 to 587 the composition is skewed to polar residues; sequence AANQAVQPSVTES. Residues 588 to 599 are compositionally biased toward basic and acidic residues; it reads SKPERSDPKDSS. The region spanning 690-987 is the Protein kinase domain; the sequence is LHIQTLIGQG…EACDLAANQK (298 aa). ATP is bound by residues 696 to 704 and K718; that span reads IGQGGYAKV. D814 serves as the catalytic Proton acceptor.

It belongs to the protein kinase superfamily. Ser/Thr protein kinase family. BUB1 subfamily. As to quaternary structure, interacts (via kinase domain) with mdf-1 (via coiled coil domain); the interaction recruits mdf-1 to unattached kinetochores during mitosis and between homologous chromosomes in early anaphase of meiosis I. May interact with bub-3; for localization at the kinetochore and the onset of anaphase.

The protein resides in the cytoplasm. Its subcellular location is the cell cortex. It is found in the nucleus. It localises to the chromosome. The protein localises to the centromere. The protein resides in the kinetochore. It carries out the reaction L-seryl-[protein] + ATP = O-phospho-L-seryl-[protein] + ADP + H(+). It catalyses the reaction L-threonyl-[protein] + ATP = O-phospho-L-threonyl-[protein] + ADP + H(+). Functionally, serine/threonine-protein kinase essential for spindle-assembly checkpoint signaling. Plays a key role in the recruitment of the checkpoint proteins bub-3, mdf-1 and mdf-2 to unattached kinetochores. mdf-1 recruitment is independent of bub-1 kinase activity. Has a role in the correct kinetochore localization of the spindly-like protein spdl-1. In addition, during meiotic anaphase I, controls the recruitment of hcp-1/2 and klp-19 to the ring-shaped domain formed between chromosomes. Involved in chromosome alignment, chromosome homolog segregation and spindle assembly. In association with bub-3 at the kinetochore region of chromosomes, promotes the onset on anaphase independently from spindle checkpoint signaling and promotes the formation of stable end-on bipolar attachments of chromosomes. Plays a role in nuclear envelope breakdown. Required maternally during embryogenesis and in the zygote for the postembryonic development of several tissues including ventral cord neurons, gonad, intestine and seam cells. This Caenorhabditis elegans protein is Mitotic checkpoint serine/threonine-protein kinase bub-1.